The primary structure comprises 265 residues: Glutamate racemase 2 (265 aa).

Residues 7–8 (DS) and 39–40 (YG) each bind substrate. The Proton donor/acceptor role is filled by Cys-70. Position 71–72 (71–72 (NT)) interacts with substrate. Cys-182 (proton donor/acceptor) is an active-site residue. 183–184 (TH) is a substrate binding site.

The protein belongs to the aspartate/glutamate racemases family.

It catalyses the reaction L-glutamate = D-glutamate. It participates in cell wall biogenesis; peptidoglycan biosynthesis. Provides the (R)-glutamate required for cell wall biosynthesis. The polypeptide is Glutamate racemase 2 (yrpC) (Bacillus subtilis (strain 168)).